The following is a 153-amino-acid chain: MFQPCCSKSTMSRSGVAVNDSALQAFNELKLGKKVTFIIYKINDAKTEIVVEEEGTTDSYDTFLGKLPENDCRYAVYDFEYEISSGEGKRSKLVFFTWSPDTAPVRSKMIYASSKDSLRRALTGISTEIQGTDFSEVAYESVLERVSRGAGSH.

The 133-residue stretch at 15–147 folds into the ADF-H domain; it reads GVAVNDSALQ…AYESVLERVS (133 aa).

This sequence belongs to the actin-binding proteins ADF family.

It is found in the cytoplasm. It localises to the cytoskeleton. The protein localises to the nucleus matrix. Controls reversibly actin polymerization and depolymerization in a pH-sensitive manner. It has the ability to bind G- and F-actin in a 1:1 ratio of cofilin to actin. Binding to F-actin is regulated by tropomyosin. It is the major component of intranuclear and cytoplasmic actin rods. Required for accumulation of actin at the cell division site via depolymerizing actin at the cell ends. In association with myosin II has a role in the assembly of the contractile ring via severing actin filaments. Involved in the maintenance of the contractile ring once formed. In association with profilin and capping protein, has a role in the mitotic reorganization of the actin cytoskeleton. The chain is Cofilin (COF1) from Yarrowia lipolytica (strain CLIB 122 / E 150) (Yeast).